Here is a 203-residue protein sequence, read N- to C-terminus: Protein GrpE (203 aa).

Residues 1 to 38 (MTQDQTAEQMPAAESADQSADQGPAAESAAPPAVDSER) are disordered.

It belongs to the GrpE family. Homodimer.

It localises to the cytoplasm. Participates actively in the response to hyperosmotic and heat shock by preventing the aggregation of stress-denatured proteins, in association with DnaK and GrpE. It is the nucleotide exchange factor for DnaK and may function as a thermosensor. Unfolded proteins bind initially to DnaJ; upon interaction with the DnaJ-bound protein, DnaK hydrolyzes its bound ATP, resulting in the formation of a stable complex. GrpE releases ADP from DnaK; ATP binding to DnaK triggers the release of the substrate protein, thus completing the reaction cycle. Several rounds of ATP-dependent interactions between DnaJ, DnaK and GrpE are required for fully efficient folding. This chain is Protein GrpE, found in Paramagnetospirillum magneticum (strain ATCC 700264 / AMB-1) (Magnetospirillum magneticum).